The sequence spans 106 residues: Small ribosomal subunit protein uS10 (106 aa).

This sequence belongs to the universal ribosomal protein uS10 family. As to quaternary structure, part of the 30S ribosomal subunit.

Its function is as follows. Involved in the binding of tRNA to the ribosomes. The sequence is that of Small ribosomal subunit protein uS10 from Mesomycoplasma hyopneumoniae (strain 232) (Mycoplasma hyopneumoniae).